A 2556-amino-acid chain; its full sequence is Ubiquitin carboxyl-terminal hydrolase 9Y (2556 aa).

Residues 1–33 (MTITTRGSPVGENESQGQTSDGQPQPSFQQNQI) are compositionally biased toward polar residues. The disordered stretch occupies residues 1 to 68 (MTITTRGSPV…QHEEEDPSFP (68 aa)). Over residues 34 to 44 (SSSDSSNETSP) the composition is skewed to low complexity. Residue Ser-587 is modified to Phosphoserine. Thr-589 carries the phosphothreonine modification. Positions 971–999 (NMPSSPDSSSDSSAGPPGNHSHNNYRDVS) are disordered. A compositionally biased stretch (low complexity) spans 973-983 (PSSPDSSSDSS). One can recognise a USP domain in the interval 1559–1958 (VGLKNAGATC…NAYILFYERM (400 aa)). Cys-1568 (nucleophile) is an active-site residue. Zn(2+) is bound by residues Cys-1729, His-1731, Cys-1773, and Cys-1776. Residue His-1881 is the Proton acceptor of the active site. Residue Ser-2447 is modified to Phosphoserine. The segment at 2513-2556 (QNYVPEQPFSGPASHHLNNPQKNDKPQETHESNEEISSCLIKDQ) is disordered. Residues 2534-2545 (KNDKPQETHESN) show a composition bias toward basic and acidic residues. Phosphoserine is present on Ser-2549.

It belongs to the peptidase C19 family.

It carries out the reaction Thiol-dependent hydrolysis of ester, thioester, amide, peptide and isopeptide bonds formed by the C-terminal Gly of ubiquitin (a 76-residue protein attached to proteins as an intracellular targeting signal).. It functions in the pathway protein modification; protein ubiquitination. Its function is as follows. Deubiquitinase that mediates deubiquitination of target proteins. May stabilize target proteins that are important for male germ cell development. The polypeptide is Ubiquitin carboxyl-terminal hydrolase 9Y (Mus musculus (Mouse)).